Consider the following 88-residue polypeptide: U-scoloptoxin(12)-Sa1a (88 aa).

A signal peptide spans 1 to 20; sequence MKYMIITVVILFTCALKMFC.

This sequence belongs to the scoloptoxin-12 family. Contains 3 disulfide bonds. In terms of tissue distribution, expressed by the venom gland.

The protein localises to the secreted. The protein is U-scoloptoxin(12)-Sa1a of Scolopendra alternans (Florida Keys giant centipede).